A 130-amino-acid polypeptide reads, in one-letter code: Small ribosomal subunit protein eS8 (130 aa).

The protein belongs to the eukaryotic ribosomal protein eS8 family. Part of the 30S ribosomal subunit.

The chain is Small ribosomal subunit protein eS8 from Thermococcus gammatolerans (strain DSM 15229 / JCM 11827 / EJ3).